We begin with the raw amino-acid sequence, 158 residues long: Transcription elongation factor GreA (158 aa).

Residues 45 to 72 adopt a coiled-coil conformation; sequence AEYHAAREQQSFIEGRIKQLEGELSHAE.

Belongs to the GreA/GreB family.

Its function is as follows. Necessary for efficient RNA polymerase transcription elongation past template-encoded arresting sites. The arresting sites in DNA have the property of trapping a certain fraction of elongating RNA polymerases that pass through, resulting in locked ternary complexes. Cleavage of the nascent transcript by cleavage factors such as GreA or GreB allows the resumption of elongation from the new 3'terminus. GreA releases sequences of 2 to 3 nucleotides. The polypeptide is Transcription elongation factor GreA (Xylella fastidiosa (strain M23)).